A 611-amino-acid chain; its full sequence is Procollagen galactosyltransferase 1-B (611 aa).

The first 24 residues, 1 to 24 (MSQAGVERLLKGLQILVLVLRLSA), serve as a signal peptide directing secretion. 5 N-linked (GlcNAc...) asparagine glycosylation sites follow: Asn85, Asn173, Asn370, Asn373, and Asn568. Residues 576 to 591 (DRAKSRKTHQQEKLRS) show a composition bias toward basic and acidic residues. Residues 576-611 (DRAKSRKTHQQEKLRSEALNTPSMGSPFDNTARDEL) are disordered. The Prevents secretion from ER signature appears at 608 to 611 (RDEL).

It belongs to the glycosyltransferase 25 family.

The protein resides in the endoplasmic reticulum lumen. The enzyme catalyses (5R)-5-hydroxy-L-lysyl-[collagen] + UDP-alpha-D-galactose = (5R)-5-O-(beta-D-galactosyl)-5-hydroxy-L-lysyl-[collagen] + UDP + H(+). Its function is as follows. Beta-galactosyltransferase that transfers beta-galactose to hydroxylysine residues of type I collagen. By acting on collagen glycosylation, facilitates the formation of collagen triple helix. This Xenopus laevis (African clawed frog) protein is Procollagen galactosyltransferase 1-B (colgalt1-b).